An 84-amino-acid polypeptide reads, in one-letter code: Envelope glycoprotein N (84 aa).

The signal sequence occupies residues 1 to 26 (MSCKKSARQSLYVSLCLFYILVFAAA). Residues 27–47 (TEVDFYSPECHSHTYEIVLNS) are Virion surface-facing. A helical membrane pass occupies residues 48–68 (FSSIWLLINLFLLLCSFAIFL). Topologically, residues 69-84 (KYWCYKTFASETVKGY) are intravirion.

Belongs to the herpesviridae glycoprotein N family. As to quaternary structure, interacts (via N-terminus) with gM (via N-terminus). The gM-gN heterodimer forms the gCII complex.

The protein localises to the virion membrane. It localises to the host membrane. The protein resides in the host Golgi apparatus. Its subcellular location is the host trans-Golgi network. Envelope glycoprotein necessary for proper maturation of gM and modulation of its membrane fusion activity. Also plays a critical role in virion morphogenesis. This Homo sapiens (Human) protein is Envelope glycoprotein N.